The following is a 267-amino-acid chain: Large ribosomal subunit protein mL57 (267 aa).

Residues 43 to 54 (SSSAVQQEQDAS) show a composition bias toward low complexity. The interval 43–73 (SSSAVQQEQDASGTSSSQQPRPRWSYTPERM) is disordered.

This sequence belongs to the ribonuclease III family. Mitochondrion-specific ribosomal protein mL57 subfamily. In terms of assembly, component of the mitochondrial large ribosomal subunit (mt-LSU). Mature N.crassa 74S mitochondrial ribosomes consist of a small (37S) and a large (54S) subunit. The 37S small subunit contains a 16S ribosomal RNA (16S mt-rRNA) and 32 different proteins. The 54S large subunit contains a 23S rRNA (23S mt-rRNA) and 42 different proteins. mL57 forms a heterodimer with mL44 and stabilizes rRNA expansion segments 1/2 at a membrane-facing protuberance close to the point of attachment of the ribosome to the translocon in the membrane.

It localises to the mitochondrion. Functionally, component of the mitochondrial ribosome (mitoribosome), a dedicated translation machinery responsible for the synthesis of mitochondrial genome-encoded proteins, including at least some of the essential transmembrane subunits of the mitochondrial respiratory chain. The mitoribosomes are attached to the mitochondrial inner membrane and translation products are cotranslationally integrated into the membrane. This chain is Large ribosomal subunit protein mL57 (mrpl15), found in Neurospora crassa (strain ATCC 24698 / 74-OR23-1A / CBS 708.71 / DSM 1257 / FGSC 987).